We begin with the raw amino-acid sequence, 516 residues long: Cytochrome P450 monooxygenase ntnM (516 aa).

Residues 22-42 (IINVILSIAAIALIRALAISI) form a helical membrane-spanning segment. Cys453 contacts heme.

This sequence belongs to the cytochrome P450 family. Heme serves as cofactor.

It localises to the membrane. The protein operates within secondary metabolite biosynthesis; terpenoid biosynthesis. Functionally, cytochrome P450 monooxygenase; part of the gene cluster that mediates the biosynthesis of the meroterpenoids nectripenoids A and B, as well as cochliquninone D and isocochliquninone E. The pathway probably begins with the HR-PKS ntnH that catalyzes two chain-extension steps to form a reduced triketide, which then primes the SAT domain in the NR-PKS ntnG to initiate three more cycles of extension to give a linear hexaketide corresponding to the polyketide part of nectripenoids. The FAD-dependent monooxygenase ntnJ then performs an oxidative decarboxylation at C11 of the ntnH/ntnG product, via an electrophilic aromatic hydroxylation with concomitant ipso-decarboxylation. The membrane-bound polyprenyl transferase ntnF then introduces a farnesyl group before the FAD-dependent monooxygenase ntnK functions as the first epoxidase on terminal C12'-C13' olefin, followed by a second epoxidation on C7'-C8' catalyzed by ntnA. The terpene cyclase/mutase ntnI then initiates the sequential tricyclic ring formation through protonation of the terminal epoxide and catalyzes the regioselective and stereoselective 6/6/6-tricyclic ring formation. The cytochrome P450 monooxygenase ntnM may then hydroxylate C1'. This Nectria sp protein is Cytochrome P450 monooxygenase ntnM.